Here is a 221-residue protein sequence, read N- to C-terminus: Casparian strip membrane protein 3 (221 aa).

Over residues 1–12 the composition is skewed to basic and acidic residues; that stretch reads MDIEKAGSRREE. The tract at residues 1–27 is disordered; the sequence is MDIEKAGSRREEEEPIVQRPKLDKGKG. Topologically, residues 1–58 are cytoplasmic; that stretch reads MDIEKAGSRREEEEPIVQRPKLDKGKGKAHVFAPPMNYNRIMDKHKQEKMSPAGWKRG. The helical transmembrane segment at 59–79 threads the bilayer; it reads VAIFDFVLRLIAAITAMAAAA. The Extracellular portion of the chain corresponds to 80–109; sequence KMATTEETLPFFTQFLQFQADYTDLPTMSS. A helical transmembrane segment spans residues 110–130; sequence FVIVNSIVGGYLTLSLPFSIV. Over 131-148 the chain is Cytoplasmic; the sequence is CILRPLAVPPRLFLILCD. The helical transmembrane segment at 149–169 threads the bilayer; that stretch reads TVMMGLTLMAASASAAIVYLA. The Extracellular segment spans residues 170–194; that stretch reads HNGNSSSNWLPVCQQFGDFCQGTSG. N-linked (GlcNAc...) asparagine glycosylation is present at Asn-173. Residues 195-215 form a helical membrane-spanning segment; that stretch reads AVVASFIAATLLMFLVILSAF. Topologically, residues 216-221 are cytoplasmic; it reads ALKRTT.

The protein belongs to the Casparian strip membrane proteins (CASP) family. As to quaternary structure, homodimer and heterodimers with other CASP proteins. Interacts with CASP1, CASP2, CASP4 and CASP5.

It localises to the cell membrane. In terms of biological role, regulates membrane-cell wall junctions and localized cell wall deposition. Required for establishment of the Casparian strip membrane domain (CSD) and the subsequent formation of Casparian strips, a cell wall modification of the root endodermis that determines an apoplastic barrier between the intraorganismal apoplasm and the extraorganismal apoplasm and prevents lateral diffusion. The chain is Casparian strip membrane protein 3 (CASP3) from Arabidopsis thaliana (Mouse-ear cress).